Here is a 302-residue protein sequence, read N- to C-terminus: 3-methyl-2-oxobutanoate hydroxymethyltransferase 1 (302 aa).

Positions 75 and 118 each coordinate Mg(2+). 3-methyl-2-oxobutanoate is bound by residues D75–S76, D118, and K147. E149 lines the Mg(2+) pocket. E217 functions as the Proton acceptor in the catalytic mechanism.

The protein belongs to the PanB family. Homodecamer; pentamer of dimers. Requires Mg(2+) as cofactor.

Its subcellular location is the cytoplasm. The catalysed reaction is 3-methyl-2-oxobutanoate + (6R)-5,10-methylene-5,6,7,8-tetrahydrofolate + H2O = 2-dehydropantoate + (6S)-5,6,7,8-tetrahydrofolate. Its pathway is cofactor biosynthesis; (R)-pantothenate biosynthesis; (R)-pantoate from 3-methyl-2-oxobutanoate: step 1/2. Functionally, catalyzes the reversible reaction in which hydroxymethyl group from 5,10-methylenetetrahydrofolate is transferred onto alpha-ketoisovalerate to form ketopantoate. The sequence is that of 3-methyl-2-oxobutanoate hydroxymethyltransferase 1 from Zymomonas mobilis subsp. mobilis (strain ATCC 31821 / ZM4 / CP4).